The chain runs to 237 residues: Large ribosomal subunit protein uL1 (237 aa).

It belongs to the universal ribosomal protein uL1 family. Part of the 50S ribosomal subunit.

In terms of biological role, binds directly to 23S rRNA. The L1 stalk is quite mobile in the ribosome, and is involved in E site tRNA release. Functionally, protein L1 is also a translational repressor protein, it controls the translation of the L11 operon by binding to its mRNA. This is Large ribosomal subunit protein uL1 from Dehalococcoides mccartyi (strain CBDB1).